A 447-amino-acid polypeptide reads, in one-letter code: Gamma-glutamyl phosphate reductase (447 aa).

Belongs to the gamma-glutamyl phosphate reductase family.

Its subcellular location is the cytoplasm. The enzyme catalyses L-glutamate 5-semialdehyde + phosphate + NADP(+) = L-glutamyl 5-phosphate + NADPH + H(+). It functions in the pathway amino-acid biosynthesis; L-proline biosynthesis; L-glutamate 5-semialdehyde from L-glutamate: step 2/2. In terms of biological role, catalyzes the NADPH-dependent reduction of L-glutamate 5-phosphate into L-glutamate 5-semialdehyde and phosphate. The product spontaneously undergoes cyclization to form 1-pyrroline-5-carboxylate. This Methanosarcina barkeri (strain Fusaro / DSM 804) protein is Gamma-glutamyl phosphate reductase.